We begin with the raw amino-acid sequence, 116 residues long: UPF0127 protein PF1050 (116 aa).

Belongs to the UPF0127 family.

The chain is UPF0127 protein PF1050 from Pyrococcus furiosus (strain ATCC 43587 / DSM 3638 / JCM 8422 / Vc1).